The following is a 169-amino-acid chain: Ribosome maturation factor RimM (169 aa).

The region spanning 97–169 (EDEYYWTDLV…TITADWGLDY (73 aa)) is the PRC barrel domain.

This sequence belongs to the RimM family. Binds ribosomal protein uS19.

Its subcellular location is the cytoplasm. In terms of biological role, an accessory protein needed during the final step in the assembly of 30S ribosomal subunit, possibly for assembly of the head region. Essential for efficient processing of 16S rRNA. May be needed both before and after RbfA during the maturation of 16S rRNA. It has affinity for free ribosomal 30S subunits but not for 70S ribosomes. This is Ribosome maturation factor RimM from Neisseria meningitidis serogroup B (strain ATCC BAA-335 / MC58).